The chain runs to 214 residues: CASP-like protein UU5 (214 aa).

The tract at residues 1–20 (MSTVAQDSAPGGGKIQDAME) is disordered. The Cytoplasmic segment spans residues 1–57 (MSTVAQDSAPGGGKIQDAMEQGAPGASSAAVVPEGGHYTQTPSPAFQAVKKNINHMS). A helical transmembrane segment spans residues 58–78 (AFSLGLRVAEFVLSVIAFSLM). Topologically, residues 79–99 (ASADQNGAVYSTFTSYSFVLA) are extracellular. Residues 100 to 120 (VNVLVVFYTIGQIIMSVLLLV) traverse the membrane as a helical segment. Residues 121 to 138 (SGSTPKKIYLFITFGCDQ) lie on the Cytoplasmic side of the membrane. A helical transmembrane segment spans residues 139–159 (LSAFLLMAAGAAGASVALIIN). The Extracellular portion of the chain corresponds to 160–193 (RGGVTDAYGNGCIDGKITSFCSHAQASVAFTFLS). The chain crosses the membrane as a helical span at residues 194–214 (FFCMVISSLLGVYSLAPYLIL).

The protein belongs to the Casparian strip membrane proteins (CASP) family. In terms of assembly, homodimer and heterodimers.

It localises to the cell membrane. The sequence is that of CASP-like protein UU5 from Physcomitrium patens (Spreading-leaved earth moss).